The primary structure comprises 146 residues: Anti-sigma F factor (146 aa).

This sequence belongs to the anti-sigma-factor family.

It carries out the reaction L-seryl-[protein] + ATP = O-phospho-L-seryl-[protein] + ADP + H(+). The catalysed reaction is L-threonyl-[protein] + ATP = O-phospho-L-threonyl-[protein] + ADP + H(+). Binds to sigma F and blocks its ability to form an RNA polymerase holoenzyme (E-sigma F). Phosphorylates SpoIIAA on a serine residue. This phosphorylation may enable SpoIIAA to act as an anti-anti-sigma factor that counteracts SpoIIAB and thus releases sigma F from inhibition. In Geobacillus sp. (strain WCH70), this protein is Anti-sigma F factor.